Reading from the N-terminus, the 489-residue chain is MAAHGGSAASSALKGLIQQFTTITGASESVGKHMLEACNNNLEMAVTMFLDGGGIAEEPSTSSASVSTVRPHTEEEVRAPIPQKQEILVEPEPLFGAPKRRRPARSIFDGFRDFQTETIRQEQELRNGGAIDKKLTTLADLFRPPIDLMHKGSFETAKECGQMQNKWLMINIQNVQDFACQCLNRDVWSNEAVKNIIREHFIFWQVYHDSEEGQRYIQFYKLGDFPYVSILDPRTGQKLVEWHQLDVSSFLDQVTGFLGEHGQLDGLSSSPPKKCARSESLIDASEDSQLEAAIRASLQETHFDSTQTKQDSRSDEESESELFSGSEEFISVCGSDEEEEVENLAKSRKSPHKDLGHRKEENRRPLTEPPVRTDPGTATNHQGLPAVDSEILEMPPEKADGVVEGIDVNGPKAQLMLRYPDGKREQITLPEQAKLLALVKHVQSKGYPNERFELLTNFPRRKLSHLDYDITLQEAGLCPQETVFVQERN.

Ala-2 carries the post-translational modification N-acetylalanine. In terms of domain architecture, UBA spans 2–54; it reads AAHGGSAASSALKGLIQQFTTITGASESVGKHMLEACNNNLEMAVTMFLDGGG. Residues 56–77 form a disordered region; sequence AEEPSTSSASVSTVRPHTEEEV. Residues 59–70 show a composition bias toward polar residues; it reads PSTSSASVSTVR. Lys-84 participates in a covalent cross-link: Glycyl lysine isopeptide (Lys-Gly) (interchain with G-Cter in SUMO2). Lys-99 is covalently cross-linked (Glycyl lysine isopeptide (Lys-Gly) (interchain with G-Cter in ubiquitin)). Lys-134 participates in a covalent cross-link: Glycyl lysine isopeptide (Lys-Gly) (interchain with G-Cter in SUMO2). Ser-278, Ser-280, Ser-285, and Ser-288 each carry phosphoserine. In terms of domain architecture, UIM spans 285–304; sequence SEDSQLEAAIRASLQETHFD. A compositionally biased stretch (polar residues) spans 300-309; it reads ETHFDSTQTK. Residues 300–384 form a disordered region; that stretch reads ETHFDSTQTK…PGTATNHQGL (85 aa). Thr-306 carries the post-translational modification Phosphothreonine. Basic and acidic residues predominate over residues 352–366; sequence HKDLGHRKEENRRPL. Residues 408-485 enclose the UBX domain; sequence VNGPKAQLML…GLCPQETVFV (78 aa).

Interacts with neddylated CUL2, ubiquitinated HIF1A, and VCP/p97.

The protein localises to the nucleus. Functionally, ubiquitin-binding adapter that links a subset of NEDD8-associated cullin ring ligases (CRLs) to the segregase VCP/p97, to regulate turnover of their ubiquitination substrates. The sequence is that of UBX domain-containing protein 7 (UBXN7) from Homo sapiens (Human).